Here is a 311-residue protein sequence, read N- to C-terminus: Geranylgeranyl transferase type-2 subunit beta (311 aa).

5 PFTB repeats span residues 54–95 (KERI…AMLD), 102–143 (KDKV…AILG), 150–191 (KNTA…KILN), 197–239 (DEEL…AIIG), and 246–288 (RNQL…SLLQ). Residues 176-178 (HGA) and 218-230 (RPEKLPDSCYGWW) contribute to the geranylgeranyl diphosphate site. Residues Asp-224, Cys-226, and His-276 each coordinate Zn(2+).

This sequence belongs to the protein prenyltransferase subunit beta family. Heterodimer of an alpha and a beta subunit. It depends on Zn(2+) as a cofactor.

The enzyme catalyses geranylgeranyl diphosphate + L-cysteinyl-[protein] = S-geranylgeranyl-L-cysteinyl-[protein] + diphosphate. Its function is as follows. Catalyzes the transfer of a geranyl-geranyl moiety from geranyl-geranyl pyrophosphate to proteins having the C-terminal -XCC or -XCXC, where both cysteines may become modified. The protein is Geranylgeranyl transferase type-2 subunit beta (ptb1) of Schizosaccharomyces pombe (strain 972 / ATCC 24843) (Fission yeast).